Reading from the N-terminus, the 345-residue chain is Transcription factor 19 (345 aa).

The region spanning 31–88 (YRLGHRADLCDVALRPQQEPGLISGIHAELHAEPRGDDWRVSLEDHSSQGTLVNNVRL) is the FHA domain. S78 is modified (phosphoserine). Residues 190–227 (LTFSPSWGGPKSLPVPAPPGEMGTTPSAPPQRNRRKSV) are disordered. A PHD-type zinc finger spans residues 293 to 342 (AAPCCCLPQEETVAWVQCDGCDVWFHVACVGCSIQAAREADFRCPGCRAG). Residues C296, C298, C310, C313, H318, C321, C336, and C339 each contribute to the Zn(2+) site.

The protein localises to the nucleus. Functionally, potential transcription factor that may play a role in the regulation of genes involved in cell cycle G1/S transition. May bind to regulatory elements of genes, including the promoter of the transcription factor FOXO1. This chain is Transcription factor 19 (TCF19), found in Homo sapiens (Human).